The sequence spans 55 residues: A-type ATP synthase subunit G (55 aa).

Has multiple subunits, A(3), B(3), C, D, E, F, G, I and K(x); there may be a few other subunits as well.

It localises to the cell membrane. In terms of biological role, component of the A-type ATP synthase that produces ATP from ADP in the presence of a proton gradient across the membrane. The sequence is that of A-type ATP synthase subunit G (atpG) from Methanosarcina mazei (strain ATCC BAA-159 / DSM 3647 / Goe1 / Go1 / JCM 11833 / OCM 88) (Methanosarcina frisia).